We begin with the raw amino-acid sequence, 370 residues long: Protein-tyrosine sulfotransferase 1 (370 aa).

The Cytoplasmic segment spans residues 1–8 (MVGKLKQN). The chain crosses the membrane as a helical; Signal-anchor for type II membrane protein span at residues 9-25 (LLLACLVISSVTVFYLG). Topologically, residues 26-370 (QHAMECHHRI…KEKPQTEQVE (345 aa)) are lumenal. N-linked (GlcNAc...) asparagine glycosylation is present at asparagine 60. 3'-phosphoadenylyl sulfate is bound at residue 79-83 (RSGTT). A disulfide bond links cysteine 97 and cysteine 157. Glutamate 100 (proton donor/acceptor) is an active-site residue. An interaction with peptide substrate region spans residues 102–106 (RVIPR). 3'-phosphoadenylyl sulfate-binding residues include arginine 184, serine 192, and arginine 196. Cysteine 226 and cysteine 234 are oxidised to a cystine. Tyrosine 239 lines the 3'-phosphoadenylyl sulfate pocket. An N-linked (GlcNAc...) asparagine glycan is attached at asparagine 262. 3'-phosphoadenylyl sulfate-binding positions include 286–295 (STDQVIKPVN) and lysine 301.

Belongs to the protein sulfotransferase family. Homodimer. Can also form heterodimers with TPST2. Post-translationally, N-glycosylated. As to expression, ubiquitous. Detected in heart, brain, placenta, lung, liver, skeletal muscle, kidney and pancreas.

Its subcellular location is the golgi apparatus membrane. The catalysed reaction is L-tyrosyl-[protein] + 3'-phosphoadenylyl sulfate = O-sulfo-L-tyrosine-[protein] + adenosine 3',5'-bisphosphate + H(+). Catalyzes the O-sulfation of tyrosine residues within acidic motifs of polypeptides, using 3'-phosphoadenylyl sulfate (PAPS) as cosubstrate. The chain is Protein-tyrosine sulfotransferase 1 (TPST1) from Homo sapiens (Human).